The primary structure comprises 236 residues: Alpha-tubulin N-acetyltransferase (236 aa).

The 181-residue stretch at 21-201 (ASVPDGVSRW…NKFVVFHGFF (181 aa)) folds into the N-acetyltransferase domain. Acetyl-CoA contacts are provided by residues 134–147 (FYVD…GYGK) and 171–180 (SDKLLGFMKK). The interval 217–236 (SPTGAAAAATGTKAKNEMPG) is disordered. The segment covering 219–229 (TGAAAAATGTK) has biased composition (low complexity).

The protein belongs to the acetyltransferase ATAT1 family.

It catalyses the reaction L-lysyl-[alpha-tubulin] + acetyl-CoA = N(6)-acetyl-L-lysyl-[alpha-tubulin] + CoA + H(+). Functionally, specifically acetylates 'Lys-40' in alpha-tubulin on the lumenal side of microtubules. Promotes microtubule destabilization and accelerates microtubule dynamics; this activity may be independent of acetylation activity. Acetylates alpha-tubulin with a slow enzymatic rate, due to a catalytic site that is not optimized for acetyl transfer. Enters the microtubule through each end and diffuses quickly throughout the lumen of microtubules. Acetylates only long/old microtubules because of its slow acetylation rate since it does not have time to act on dynamically unstable microtubules before the enzyme is released. This is Alpha-tubulin N-acetyltransferase from Leishmania braziliensis.